We begin with the raw amino-acid sequence, 396 residues long: S-adenosylmethionine synthase (396 aa).

His16 serves as a coordination point for ATP. Asp18 provides a ligand contact to Mg(2+). Glu44 serves as a coordination point for K(+). Positions 57 and 100 each coordinate L-methionine. Residues 100–110 (QSVDIAQGVDR) are flexible loop. ATP is bound by residues 165–167 (DAK), Asp240, 246–247 (RK), Ala263, and Lys267. Position 240 (Asp240) interacts with L-methionine. Lys271 is a binding site for L-methionine.

This sequence belongs to the AdoMet synthase family. As to quaternary structure, homotetramer; dimer of dimers. It depends on Mg(2+) as a cofactor. The cofactor is K(+).

It is found in the cytoplasm. It catalyses the reaction L-methionine + ATP + H2O = S-adenosyl-L-methionine + phosphate + diphosphate. It participates in amino-acid biosynthesis; S-adenosyl-L-methionine biosynthesis; S-adenosyl-L-methionine from L-methionine: step 1/1. Catalyzes the formation of S-adenosylmethionine (AdoMet) from methionine and ATP. The overall synthetic reaction is composed of two sequential steps, AdoMet formation and the subsequent tripolyphosphate hydrolysis which occurs prior to release of AdoMet from the enzyme. This is S-adenosylmethionine synthase from Pseudomonas putida (strain ATCC 700007 / DSM 6899 / JCM 31910 / BCRC 17059 / LMG 24140 / F1).